The chain runs to 724 residues: Solute carrier organic anion transporter family member 4C1 (724 aa).

Positions 1–80 (MQGSKGVENP…PPGSQLSELE (80 aa)) are disordered. Over 1-101 (MQGSKGVENP…QCLQRCNNPK (101 aa)) the chain is Cytoplasmic. Phosphoserine is present on residues Ser-15 and Ser-16. A Phosphothreonine modification is found at Thr-19. 3 positions are modified to phosphoserine: Ser-24, Ser-26, and Ser-28. The span at 25–46 (ASPSQVEVSAVASRNQNGGSQP) shows a compositional bias: polar residues. The chain crosses the membrane as a helical span at residues 102 to 122 (GFLLHYCLLALTQGIVVNGLV). Residues 123–141 (NISISTIEKRYEMKSSLTG) lie on the Extracellular side of the membrane. A helical membrane pass occupies residues 142–162 (LISSSYDISFCVLSLFVSFFG). At 163 to 168 (ERGHKP) the chain is on the cytoplasmic side. A helical transmembrane segment spans residues 169 to 193 (RWLAFASFMIGLGALVFSLPHFFSG). The Extracellular portion of the chain corresponds to 194–218 (RYELGTIFEDTCLTRNSTRCASSTS). A helical membrane pass occupies residues 219 to 249 (LLSNYFYVFVLGQLLLGTGGTPLYTLGTAFI). The Cytoplasmic portion of the chain corresponds to 250 to 269 (DDSVPTHKSSLYIGIGYSMS). A helical membrane pass occupies residues 270–290 (ILGPAIGYVLGGQLLTMYIDV). At 291 to 306 (AMGQSSDLTEDDPRWL) the chain is on the extracellular side. A helical membrane pass occupies residues 307 to 331 (GAWWIGFLLAWLFAWSLIMPFSCFP). Topologically, residues 332-376 (KHLPGTAKIQAGKTSQTHQNNSTSFQHMDENFGKSIKDFPTAVKN) are cytoplasmic. The helical transmembrane segment at 377-398 (LMRNTVFICLVLSTTSEALVTT) threads the bilayer. The Extracellular portion of the chain corresponds to 399–418 (GFATFLPKFIENQFGLTSSF). The helical transmembrane segment at 419-442 (AATLGGAVLIPGAALGQILGGVLV) threads the bilayer. The Cytoplasmic segment spans residues 443–446 (SKFK). Residues 447-470 (MKCKNTMKFALCTSGVALMLSFVF) form a helical membrane-spanning segment. At 471–580 (IYAKCENGPF…KTQCSNLPIF (110 aa)) the chain is on the extracellular side. The Kazal-like domain maps to 494 to 549 (GNLTAPCNANCNCLRSYYYPLCGSDGVQYFSPCFAGCLNSVSNRKPKAYYNCSCIE). Disulfide bonds link Cys-500–Cys-530, Cys-506–Cys-526, and Cys-515–Cys-547. A helical transmembrane segment spans residues 581-603 (LGIFFITVIFTFMAGTPITVSIL). Residues 604 to 612 (RCVNHRQRS) are Cytoplasmic-facing. The helical transmembrane segment at 613-638 (LALGVQFMLLRLLGTIPGPIIFGVTI) threads the bilayer. Residues 639–672 (DSTCVLWDINECGTKGACWIYDNIRMAHMLVAIS) lie on the Extracellular side of the membrane. A helical membrane pass occupies residues 673–690 (VTCKVITIFFNGLAIVLY). Residues 691–724 (KPPPPGTEVSFQSQNVVVSTITVEEDLNKIENEG) are Cytoplasmic-facing.

This sequence belongs to the organo anion transporter (TC 2.A.60) family. As to expression, predominantly expressed in kidney and lung but also weakly expressed in brain. Localizes primarily in the proximal straight tubules, the S3 fraction of the nephron.

The protein resides in the basolateral cell membrane. Its subcellular location is the apical cell membrane. The catalysed reaction is estrone 3-sulfate(out) = estrone 3-sulfate(in). The enzyme catalyses L-thyroxine(out) = L-thyroxine(in). It carries out the reaction 3,3',5-triiodo-L-thyronine(out) = 3,3',5-triiodo-L-thyronine(in). It catalyses the reaction chenodeoxycholate(out) = chenodeoxycholate(in). The catalysed reaction is glycocholate(out) = glycocholate(in). The enzyme catalyses L-homoarginine(in) = L-homoarginine(out). It carries out the reaction L-arginine(in) = L-arginine(out). It catalyses the reaction N(omega),N(omega)-dimethyl-L-arginine(out) = N(omega),N(omega)-dimethyl-L-arginine(in). Functionally, mediates the transport of organic anions such as steroids (estrone 3-sulfate, chenodeoxycholate, glycocholate) and thyroid hormones (3,3',5-triiodo-L-thyronine (T3), L-thyroxine (T4)), in the kidney. Capable of transporting cAMP and pharmacological substances such as digoxin, ouabain and methotrexate. Transport is independent of sodium, chloride ion, and ATP. Transport activity is stimulated by an acidic extracellular environment due to increased substrate affinity to the transporter. The driving force for this transport activity is currently not known. The role of hydrogencarbonate (HCO3(-), bicarbonate) as the probable counteranion that exchanges for organic anions is still not well defined. Functions as an uptake transporter at the apical membrane, suggesting a role in renal reabsorption. Involved in the renal secretion of the uremic toxin ADMA (N(omega),N(omega)-dimethyl-L-arginine or asymmetrical dimethylarginine), which is associated to cardiovascular events and mortality, and the structurally related amino acids L-arginine and L-homoarginine (a cardioprotective biomarker). Can act bidirectionally, suggesting a dual protective role of this transport protein; exporting L-homoarginine after being synthesized in proximal tubule cells, and mediating uptake of ADMA from the blood into proximal tubule cells where it is degraded by the enzyme dimethylarginine dimethylaminohydrolase 1 (DDAH1). May be involved in sperm maturation by enabling directed movement of organic anions and compounds within or between cells. This ion-transporting process is important to maintain the strict epididymal homeostasis necessary for sperm maturation. May have a role in secretory functions since seminal vesicle epithelial cells are assumed to secrete proteins involved in decapacitation by modifying surface proteins to facilitate the acquisition of the ability to fertilize the egg. This is Solute carrier organic anion transporter family member 4C1 from Rattus norvegicus (Rat).